Reading from the N-terminus, the 175-residue chain is B9 domain-containing protein 2 (175 aa).

The C2 B9-type domain occupies 2 to 118 (AELHIIGQII…QCVTWRPLGS (117 aa)).

This sequence belongs to the B9D family. In terms of assembly, part of the tectonic-like complex (also named B9 complex).

The protein resides in the cytoplasm. Its subcellular location is the cytoskeleton. The protein localises to the cilium basal body. It is found in the cilium axoneme. Functionally, component of the tectonic-like complex, a complex localized at the transition zone of primary cilia and acting as a barrier that prevents diffusion of transmembrane proteins between the cilia and plasma membranes. In Danio rerio (Zebrafish), this protein is B9 domain-containing protein 2 (b9d2).